The sequence spans 207 residues: D-aminoacyl-tRNA deacylase 1 (207 aa).

The Gly-cisPro motif, important for rejection of L-amino acids motif lies at 139–140 (GP). Residues 142-207 (TIQLESPPAP…EGDVSSEREP (66 aa)) are disordered. Composition is skewed to basic and acidic residues over residues 156-167 (LLSKQEKQQQRK) and 178-189 (SSREKAAQRSKV).

It belongs to the DTD family. In terms of assembly, homodimer.

The protein resides in the cytoplasm. It catalyses the reaction a D-aminoacyl-tRNA + H2O = a tRNA + a D-alpha-amino acid + H(+). The catalysed reaction is glycyl-tRNA(Ala) + H2O = tRNA(Ala) + glycine + H(+). In terms of biological role, D-aminoacyl-tRNA deacylase, with no observable activity on tRNAs charged with their cognate L-amino acid. Hydrolyzes correctly charged, achiral, glycyl-tRNA(Gly). Deacylates mischarged D.melanogaster and E.coli glycyl-tRNA(Ala), protecting cells against glycine mischarging by AlaRS. Acts via tRNA-based rather than protein-based catalysis; rejects L-amino acids rather than detecting D-amino acids in the active site. By recycling D-aminoacyl-tRNA to D-amino acids and free tRNA molecules, this enzyme counteracts the toxicity associated with the formation of D-aminoacyl-tRNA entities in vivo and helps enforce protein L-homochirality. The protein is D-aminoacyl-tRNA deacylase 1 of Danio rerio (Zebrafish).